Consider the following 471-residue polypeptide: WASH complex subunit 1 (471 aa).

Residues M1–R54 are required for WASH complex assembly. Residues M1–I167 form a WHD1 region. The interval E297–S471 is disordered. Pro residues predominate over residues R304 to Q336. A VCA region spans residues Q353–S471. The WH2 domain occupies G365–V387. The span at S386–Q402 shows a compositional bias: basic and acidic residues. The segment covering S428–G442 has biased composition (gly residues). A compositionally biased stretch (acidic residues) spans G462–S471.

This sequence belongs to the WASH1 family. Component of the WASH core complex also described as WASH regulatory complex SHRC composed of WASHC1, WASHC2, WASHC3, WASHC4 and WASHC5. The WASH core complex associates with the F-actin-capping protein dimer (formed by CAPZA1, CAPZA2 or CAPZA3 and CAPZB); the assembly has been initially described as WASH complex. Interacts (via WHD1 region) with WASHC2; the interaction is direct. Interacts with alpha-tubulin. Interacts with BECN1; WASHC1 and AMBRA1 can competitively interact with BECN1. Interacts with BLOC1S2; may associate with the BLOC-1 complex. Interacts with tubulin gamma chain (TUBG1 or TUBG2). Interacts with TBC1D23.

Its subcellular location is the early endosome membrane. The protein localises to the recycling endosome membrane. It is found in the late endosome. The protein resides in the cytoplasmic vesicle. It localises to the autophagosome. Its subcellular location is the cytoplasm. The protein localises to the cytoskeleton. It is found in the microtubule organizing center. The protein resides in the centrosome. It localises to the centriole. Functionally, acts as a component of the WASH core complex that functions as a nucleation-promoting factor (NPF) at the surface of endosomes, where it recruits and activates the Arp2/3 complex to induce actin polymerization, playing a key role in the fission of tubules that serve as transport intermediates during endosome sorting. Involved in endocytic trafficking of EGF. Involved in transferrin receptor recycling. Regulates the trafficking of endosomal alpha5beta1 integrin to the plasma membrane and involved in invasive cell migration. In T-cells involved in endosome-to-membrane recycling of receptors including T-cell receptor (TCR), CD28 and ITGAL; proposed to be implicated in T-cell proliferation and effector function. In dendritic cells involved in endosome-to-membrane recycling of major histocompatibility complex (MHC) class II probably involving retromer and subsequently allowing antigen sampling, loading and presentation during T-cell activation. Involved in negative regulation of autophagy independently from its role in endosomal sorting by inhibiting BECN1 ubiquitination to inactivate PIK3C3/Vps34 activity. This is WASH complex subunit 1 from Bos taurus (Bovine).